We begin with the raw amino-acid sequence, 188 residues long: MLLREIKDQTKQVVQEVLELSDLQKGQIFVLGLSSSEVIGGHIGKNSSLEVGEVVVETILEILDQKGIYLAVQGCEHLNRALVVERELAIQKDLEIVNVLPTLHAGGSGQLAAFKYMKDPVEVEFITAQAGVDIGDTAIGMHIKHVQVPIRPSLREIGQAHVTALASRPKLIGGVRAAYQEDEIRKGS.

This sequence belongs to the UPF0340 family.

The polypeptide is UPF0340 protein SSU98_0310 (Streptococcus suis (strain 98HAH33)).